The following is a 77-amino-acid chain: Large ribosomal subunit protein bL28 (77 aa).

This sequence belongs to the bacterial ribosomal protein bL28 family.

In Variovorax paradoxus (strain S110), this protein is Large ribosomal subunit protein bL28.